A 502-amino-acid chain; its full sequence is Cytochrome P450 3A40 (502 aa).

C443 serves as a coordination point for heme.

The protein belongs to the cytochrome P450 family. The cofactor is heme.

The protein resides in the endoplasmic reticulum membrane. It localises to the microsome membrane. It carries out the reaction an organic molecule + reduced [NADPH--hemoprotein reductase] + O2 = an alcohol + oxidized [NADPH--hemoprotein reductase] + H2O + H(+). This chain is Cytochrome P450 3A40 (cyp3a40), found in Oryzias latipes (Japanese rice fish).